The primary structure comprises 226 residues: Ribonuclease 3 (226 aa).

An RNase III domain is found at 6 to 128; it reads ANKIQQILGY…LIGSIYLDSN (123 aa). Glu41 provides a ligand contact to Mg(2+). The active site involves Asp45. Positions 114 and 117 each coordinate Mg(2+). Residue Glu117 is part of the active site. Residues 155 to 225 enclose the DRBM domain; the sequence is DPKTRLQEYL…ARKALIKLGV (71 aa).

Belongs to the ribonuclease III family. Homodimer. Mg(2+) serves as cofactor.

It localises to the cytoplasm. The enzyme catalyses Endonucleolytic cleavage to 5'-phosphomonoester.. Functionally, digests double-stranded RNA. Involved in the processing of primary rRNA transcript to yield the immediate precursors to the large and small rRNAs (23S and 16S). Processes some mRNAs, and tRNAs when they are encoded in the rRNA operon. Processes pre-crRNA and tracrRNA of type II CRISPR loci if present in the organism. In Buchnera aphidicola subsp. Schizaphis graminum (strain Sg), this protein is Ribonuclease 3.